The sequence spans 674 residues: MPLVAAMLTRSNGAWKKATSVVQASICRDQQRPNHTTITSVTSVSQRRHFSSAENGAKPSRSHPSAAEAKQKRESDREFLISVLESSATKRDAKAYLQTYGSSKAKAVPKESPASTALVSDKAIPEAKDVSFFVQGSVPVESLEADEVPRVAIVKLREPQTWDDTLLGGVAKTLTRLRDLGLRSVIVLECSAEKSSVLDWKDVVTQQTDRLQKAIQKYGTPGAELVDGGIWKRSTTPPSASSLGHTKLSVGFGEAFTAPLRHGHILVVPSRAVVEETLEHTAADANEVIFALAKYFAGLQVNAGQNQTRTAVVDRVIIIDPFGGIPARNLGDGARVFINLEEQFNSIKATLSAAEPQDNGSPIPGISGNPKASHIENLELVKNILAILPSTASAVITSPIEAANLQSNQAYDIRRDAEEAMAGEVKTRRWQNPIIHNLLTDRPIYSASLPIGRIKSTTNGTYQRSSRMPTTTLAKKGLPVTIFPDTRTRSWQPPKPGTPRLKLTDTCVDLPRLIHLINDSFGRKLDAEHYLNRVQDSLAGIIIAGEYEGGAILTWERPFGLDEETAYNSGRLVPYLDKFAVLKKSQGAGGVADIVFNAMVRDCFPNGVCWRSRKDNPVNKWYFERSRGVRKLPGSNWAMFWTTPEAAVKDQVMEDYEDVCRGVVPSWADSKAAD.

Residues 1–50 (MPLVAAMLTRSNGAWKKATSVVQASICRDQQRPNHTTITSVTSVSQRRHF) constitute a mitochondrion transit peptide. Positions 33-45 (PNHTTITSVTSVS) are enriched in polar residues. Positions 33–74 (PNHTTITSVTSVSQRRHFSSAENGAKPSRSHPSAAEAKQKRE) are disordered. Positions 497–665 (GTPRLKLTDT…YEDVCRGVVP (169 aa)) constitute an N-acetyltransferase domain.

Belongs to the acetyltransferase family.

It is found in the mitochondrion. The enzyme catalyses L-glutamate + acetyl-CoA = N-acetyl-L-glutamate + CoA + H(+). Its pathway is amino-acid biosynthesis; L-arginine biosynthesis; N(2)-acetyl-L-ornithine from L-glutamate: step 1/4. Functionally, N-acetylglutamate synthase involved in arginine biosynthesis. This chain is Amino-acid acetyltransferase, mitochondrial (ARG2), found in Podospora anserina (strain S / ATCC MYA-4624 / DSM 980 / FGSC 10383) (Pleurage anserina).